We begin with the raw amino-acid sequence, 376 residues long: Putative E3 ubiquitin-protein ligase XBAT34 (376 aa).

ANK repeat units follow at residues 41–71 and 77–106; these read LGRTPLILACTNDDLYDVAKTLLELGSNVNA and NGGTPLHHAAKRGLVHTVKLLLSHGANPLV. An RING-type zinc finger spans residues 325-364; sequence CVICVDAPSEAVCVPCGHVAGCISCLKEIENKKMGCPVCR.

It carries out the reaction S-ubiquitinyl-[E2 ubiquitin-conjugating enzyme]-L-cysteine + [acceptor protein]-L-lysine = [E2 ubiquitin-conjugating enzyme]-L-cysteine + N(6)-ubiquitinyl-[acceptor protein]-L-lysine.. Its pathway is protein modification; protein ubiquitination. No E3 ubiquitin-protein ligase activity observed when associated with the E2 enzyme UBC8 in vitro. In Arabidopsis thaliana (Mouse-ear cress), this protein is Putative E3 ubiquitin-protein ligase XBAT34 (XBAT34).